The sequence spans 280 residues: 4-diphosphocytidyl-2-C-methyl-D-erythritol kinase (280 aa).

The active site involves K8. Residue 91–101 participates in ATP binding; that stretch reads PVAAGLAGGSS. Residue D133 is part of the active site.

This sequence belongs to the GHMP kinase family. IspE subfamily.

It catalyses the reaction 4-CDP-2-C-methyl-D-erythritol + ATP = 4-CDP-2-C-methyl-D-erythritol 2-phosphate + ADP + H(+). Its pathway is isoprenoid biosynthesis; isopentenyl diphosphate biosynthesis via DXP pathway; isopentenyl diphosphate from 1-deoxy-D-xylulose 5-phosphate: step 3/6. In terms of biological role, catalyzes the phosphorylation of the position 2 hydroxy group of 4-diphosphocytidyl-2C-methyl-D-erythritol. This is 4-diphosphocytidyl-2-C-methyl-D-erythritol kinase from Clostridium kluyveri (strain NBRC 12016).